We begin with the raw amino-acid sequence, 633 residues long: Probable potassium transport system protein Kup 3 (633 aa).

11 consecutive transmembrane segments (helical) span residues 61–81 (LVSL…VLFL), 107–127 (PVLM…DAMI), 143–163 (VAPA…LLLF), 173–193 (VSVF…AAGV), 211–231 (AIGF…AIFL), 255–275 (WFAV…ALVL), 287–307 (LMFP…GTII), 345–365 (IYLP…MLMF), 371–391 (LAPA…ILAF), 402–422 (ALTA…FLGA), and 427–447 (IHHG…MMWT).

This sequence belongs to the HAK/KUP transporter (TC 2.A.72) family.

The protein localises to the cell inner membrane. The enzyme catalyses K(+)(in) + H(+)(in) = K(+)(out) + H(+)(out). In terms of biological role, transport of potassium into the cell. Likely operates as a K(+):H(+) symporter. In Sinorhizobium medicae (strain WSM419) (Ensifer medicae), this protein is Probable potassium transport system protein Kup 3.